Consider the following 625-residue polypeptide: Glucose dehydrogenase [FAD, quinone] (625 aa).

A signal peptide spans 1–42 (MSASASACDCLVGVPTGPTLASTCGGSAFMLFMGLLEVFIRS). 66–95 (DFIVIGGGSAGSVVASRLSEVPQWKVLLIE) is an FAD binding site. Histidine 544 serves as the catalytic Proton acceptor. A non-standard amino acid (selenocysteine) is located at residue selenocysteine 613.

This sequence belongs to the GMC oxidoreductase family. It depends on FAD as a cofactor.

The protein localises to the secreted. It carries out the reaction a quinone + D-glucose = D-glucono-1,5-lactone + a quinol. Its function is as follows. Essential for cuticular modification during development. The protein is Glucose dehydrogenase [FAD, quinone] (Gld) of Drosophila melanogaster (Fruit fly).